The primary structure comprises 445 residues: Probable phosphoglucosamine mutase (445 aa).

The active-site Phosphoserine intermediate is S99. Mg(2+) is bound by residues S99, D238, D240, and D242. S99 is subject to Phosphoserine.

This sequence belongs to the phosphohexose mutase family. It depends on Mg(2+) as a cofactor. In terms of processing, activated by phosphorylation.

The catalysed reaction is alpha-D-glucosamine 1-phosphate = D-glucosamine 6-phosphate. Its function is as follows. Catalyzes the conversion of glucosamine-6-phosphate to glucosamine-1-phosphate. This Methanobrevibacter smithii (strain ATCC 35061 / DSM 861 / OCM 144 / PS) protein is Probable phosphoglucosamine mutase.